The following is a 168-amino-acid chain: Plastocyanin B, chloroplastic (168 aa).

The transit peptide at 1–69 (MAAVTSAAVS…SAMIASNAMA (69 aa)) directs the protein to the chloroplast. The region spanning 70–168 (VDVLLGADDG…AGMVGKVIVN (99 aa)) is the Plastocyanin-like domain. Cu cation-binding residues include His-106, Cys-153, His-156, and Met-161.

This sequence belongs to the plastocyanin family. Cu(2+) is required as a cofactor.

The protein resides in the plastid. The protein localises to the chloroplast thylakoid membrane. Functionally, participates in electron transfer between P700 and the cytochrome b6-f complex in photosystem I. The chain is Plastocyanin B, chloroplastic (PETE) from Populus nigra (Lombardy poplar).